A 161-amino-acid polypeptide reads, in one-letter code: MPKVAVGGTFQYFHDGHAKLIEKAFEIAEDGKVHIGLTSDEMLSKSHSVDNYEKRRNWLLQYIKEMGIPDDRYEITKLNDPYGPALEEDFDYIIVSPETYPVALKMNRIREEKGKKLLEIVYVEYVMAEDGIPISSTRIAKGEIDRHGRLKKNIKHCNTKN.

The protein belongs to the eukaryotic CoaD family.

It is found in the cytoplasm. The enzyme catalyses (R)-4'-phosphopantetheine + ATP + H(+) = 3'-dephospho-CoA + diphosphate. It functions in the pathway cofactor biosynthesis; coenzyme A biosynthesis. Functionally, reversibly transfers an adenylyl group from ATP to 4'-phosphopantetheine, yielding dephospho-CoA (dPCoA) and pyrophosphate. This chain is Phosphopantetheine adenylyltransferase, found in Methanosarcina barkeri (strain Fusaro / DSM 804).